The primary structure comprises 1292 residues: Kinesin-like protein KIN-12A (1292 aa).

The segment at 1–86 (MKKHFTLPRN…LSAETATESG (86 aa)) is disordered. A compositionally biased stretch (low complexity) spans 19–29 (PHSPNPSISKS). A compositionally biased stretch (pro residues) spans 62 to 71 (PLPPRPPPSN). In terms of domain architecture, Kinesin motor spans 91–426 (GVKVIVRMKP…LRFAQRAKAI (336 aa)). An ATP-binding site is contributed by 165-172 (GQTGSGKT). Microtubules-binding stretches follow at residues 293-297 (SSRSH), 326-332 (VDLAGSE), and 375-379 (HIPYR). A neck region spans residues 424 to 461 (KAIQNKAVVNEVMQDDVNFLRGVIHQLRDELQRMKNDG). The tract at residues 677–724 (SVSPTIRNSRKSLKTSELSTASQKDSEGENLVTEAADPSPATSKKMNN) is disordered. 2 coiled-coil regions span residues 945–992 (EVLK…CYID) and 1047–1232 (SEEL…NQLV).

It belongs to the TRAFAC class myosin-kinesin ATPase superfamily. Kinesin family. KIN-12 subfamily. As to quaternary structure, homodimer and heterodimer with KIN12B. Interacts with TIO.

It localises to the cytoplasm. Its subcellular location is the cytoskeleton. The protein localises to the phragmoplast. Functionally, plus-end directed kinesin-like motor enzyme that plays a critical role in the organization of phragmoplast microtubules during cytokinesis. Constitutes a signaling module in association with serine/threonine-protein kinase TIO that is required to support phragmoplast expansion and cell-plate growth in plant cells. Binds microtubules in an ATP-sensitive manner. The sequence is that of Kinesin-like protein KIN-12A from Arabidopsis thaliana (Mouse-ear cress).